Reading from the N-terminus, the 502-residue chain is Lysine--tRNA ligase (502 aa).

Positions 398 and 405 each coordinate Mg(2+).

This sequence belongs to the class-II aminoacyl-tRNA synthetase family. In terms of assembly, homodimer. It depends on Mg(2+) as a cofactor.

The protein resides in the cytoplasm. The enzyme catalyses tRNA(Lys) + L-lysine + ATP = L-lysyl-tRNA(Lys) + AMP + diphosphate. The chain is Lysine--tRNA ligase (lysS) from Thermotoga maritima (strain ATCC 43589 / DSM 3109 / JCM 10099 / NBRC 100826 / MSB8).